The following is a 339-amino-acid chain: Phosphate acyltransferase (339 aa).

Belongs to the PlsX family. In terms of assembly, homodimer. Probably interacts with PlsY.

The protein localises to the cytoplasm. It catalyses the reaction a fatty acyl-[ACP] + phosphate = an acyl phosphate + holo-[ACP]. Its pathway is lipid metabolism; phospholipid metabolism. Catalyzes the reversible formation of acyl-phosphate (acyl-PO(4)) from acyl-[acyl-carrier-protein] (acyl-ACP). This enzyme utilizes acyl-ACP as fatty acyl donor, but not acyl-CoA. This chain is Phosphate acyltransferase, found in Tolumonas auensis (strain DSM 9187 / NBRC 110442 / TA 4).